A 568-amino-acid chain; its full sequence is Archaeosine synthase subunit alpha (568 aa).

The PUA domain maps to 496–565 (YDALKSYWVK…AKKGVAVKVR (70 aa)).

The protein belongs to the archaeosine synthase type 1 family. In terms of assembly, forms a robust complex with the archaeosine synthase beta subunit RaSEA, likely an alpha(2)beta(2) heterotetrameric structure. Formation of this complex highly increases lysine transfer activity.

The enzyme catalyses 7-cyano-7-carbaguanosine(15) in tRNA + L-lysine = 7-N-[(5S)-5-amino-5-carboxypentyl]formamidino-7-deazaguanosine(15) in tRNA. The protein operates within tRNA modification; archaeosine-tRNA biosynthesis. Functionally, functions in the biosynthesis of archaeosine, a modified nucleoside present in the dihydrouridine loop (D-loop) of archaeal tRNAs. Catalyzes the addition of L-lysine to the cyano group of 7-cyano-7-deazaguanine (preQ0)-modified tRNAs at position 15, to generate q0kN15-tRNA, a q0N lysine adduct identified as 7-N-[(5S)-5-amino-5-carboxypentyl]formamidino-7-deazaguanosine. The protein is Archaeosine synthase subunit alpha of Thermococcus kodakarensis (strain ATCC BAA-918 / JCM 12380 / KOD1) (Pyrococcus kodakaraensis (strain KOD1)).